The chain runs to 251 residues: Cell division protein ZapD (251 aa).

The protein belongs to the ZapD family. In terms of assembly, interacts with FtsZ.

The protein localises to the cytoplasm. Functionally, cell division factor that enhances FtsZ-ring assembly. Directly interacts with FtsZ and promotes bundling of FtsZ protofilaments, with a reduction in FtsZ GTPase activity. This Nitrosomonas eutropha (strain DSM 101675 / C91 / Nm57) protein is Cell division protein ZapD.